The sequence spans 116 residues: MSQQKQQLTENQIIEHYKDLKSQQQQIISRISEFESDVGEYGLVINAIQNLESNRKCFRMVGGVLVERTVGEVLPQIKQNRDGIKEVVKKLDENLSIKTKELNDFVALYKIKITSQ.

It belongs to the prefoldin subunit beta family. In terms of assembly, heterohexamer of two PFD-alpha type and four PFD-beta type subunits.

Binds specifically to cytosolic chaperonin (c-CPN) and transfers target proteins to it. Binds to nascent polypeptide chain and promotes folding in an environment in which there are many competing pathways for nonnative proteins. The polypeptide is Probable prefoldin subunit 2 (pfdn2) (Dictyostelium discoideum (Social amoeba)).